We begin with the raw amino-acid sequence, 144 residues long: Small ribosomal subunit protein eS12z (144 aa).

S2 carries the post-translational modification N-acetylserine.

This sequence belongs to the eukaryotic ribosomal protein eS12 family.

This Arabidopsis thaliana (Mouse-ear cress) protein is Small ribosomal subunit protein eS12z (RPS12A).